Consider the following 250-residue polypeptide: MASLRIEVISLFPEMFSAISEYGITSRAVKQGLLQLTCWNPRDYTTDRHHTVDDRPFGGGPGMVMKIKPLEDALVQARQAAGDAAKVIYLSPQGRQLNQSAVRELAQEEAIILIAGRYEGIDERFIDAHVDEEWSIGDYVLSGGELPAMVLIDAVTRLLPGALGHVDSAEEDSFTDGLLDCPHYTRPEVYADQRVPDVLLSGNHAHIRRWRLQQSLGRTYERRADLLESRSLSGEEKKLLAEYIRERDDS.

S-adenosyl-L-methionine contacts are provided by residues G116 and 136–141 (IGDYVL).

The protein belongs to the RNA methyltransferase TrmD family. As to quaternary structure, homodimer.

The protein localises to the cytoplasm. It carries out the reaction guanosine(37) in tRNA + S-adenosyl-L-methionine = N(1)-methylguanosine(37) in tRNA + S-adenosyl-L-homocysteine + H(+). In terms of biological role, specifically methylates guanosine-37 in various tRNAs. The protein is tRNA (guanine-N(1)-)-methyltransferase of Pseudomonas savastanoi pv. phaseolicola (strain 1448A / Race 6) (Pseudomonas syringae pv. phaseolicola (strain 1448A / Race 6)).